The following is a 267-amino-acid chain: 4-hydroxy-tetrahydrodipicolinate reductase (267 aa).

G10 to M15 provides a ligand contact to NAD(+). R38 is an NADP(+) binding site. Residues G100–T102 and A126–F129 contribute to the NAD(+) site. H156 functions as the Proton donor/acceptor in the catalytic mechanism. H157 is a binding site for (S)-2,3,4,5-tetrahydrodipicolinate. K160 serves as the catalytic Proton donor. G166–T167 is a binding site for (S)-2,3,4,5-tetrahydrodipicolinate.

It belongs to the DapB family.

It localises to the cytoplasm. It carries out the reaction (S)-2,3,4,5-tetrahydrodipicolinate + NAD(+) + H2O = (2S,4S)-4-hydroxy-2,3,4,5-tetrahydrodipicolinate + NADH + H(+). It catalyses the reaction (S)-2,3,4,5-tetrahydrodipicolinate + NADP(+) + H2O = (2S,4S)-4-hydroxy-2,3,4,5-tetrahydrodipicolinate + NADPH + H(+). The protein operates within amino-acid biosynthesis; L-lysine biosynthesis via DAP pathway; (S)-tetrahydrodipicolinate from L-aspartate: step 4/4. Functionally, catalyzes the conversion of 4-hydroxy-tetrahydrodipicolinate (HTPA) to tetrahydrodipicolinate. This Desulfitobacterium hafniense (strain DSM 10664 / DCB-2) protein is 4-hydroxy-tetrahydrodipicolinate reductase.